The primary structure comprises 576 residues: Eukaryotic translation initiation factor 3 subunit D (576 aa).

A disordered region spans residues 103–176; the sequence is DSTKTRFGRG…KDYDKPQRNR (74 aa). The segment covering 110-122 has biased composition (gly residues); it reads GRGGLARGRGQRG. A compositionally biased stretch (basic and acidic residues) spans 165–176; sequence GWKDYDKPQRNR. Residues 304–318 form an RNA gate region; the sequence is TLDMVTVNENAADAP.

The protein belongs to the eIF-3 subunit D family. In terms of assembly, component of the eukaryotic translation initiation factor 3 (eIF-3) complex.

It is found in the cytoplasm. MRNA cap-binding component of the eukaryotic translation initiation factor 3 (eIF-3) complex, which is involved in protein synthesis of a specialized repertoire of mRNAs and, together with other initiation factors, stimulates binding of mRNA and methionyl-tRNAi to the 40S ribosome. The eIF-3 complex specifically targets and initiates translation of a subset of mRNAs involved in cell proliferation. In the eIF-3 complex, eif3d specifically recognizes and binds the 7-methylguanosine cap of a subset of mRNAs. This chain is Eukaryotic translation initiation factor 3 subunit D, found in Botryotinia fuckeliana (strain B05.10) (Noble rot fungus).